A 301-amino-acid chain; its full sequence is Probable alpha-L-glutamate ligase (301 aa).

Positions 104 to 287 (TQLLARKGIG…IAGTIYAFLE (184 aa)) constitute an ATP-grasp domain. ATP-binding positions include lysine 141, 178 to 179 (EY), aspartate 187, and 211 to 213 (RSN). Residues aspartate 248, glutamate 260, and asparagine 262 each coordinate Mg(2+). Residues aspartate 248, glutamate 260, and asparagine 262 each contribute to the Mn(2+) site.

This sequence belongs to the RimK family. It depends on Mg(2+) as a cofactor. The cofactor is Mn(2+).

The polypeptide is Probable alpha-L-glutamate ligase (Alkalilimnicola ehrlichii (strain ATCC BAA-1101 / DSM 17681 / MLHE-1)).